The chain runs to 512 residues: Perphorin-1 (512 aa).

The signal sequence occupies residues 1–18 (MMRKALLALCVATAFAVA). N-linked (GlcNAc...) asparagine glycans are attached at residues Asn-49, Asn-96, Asn-118, Asn-378, Asn-381, Asn-403, and Asn-476.

The protein resides in the secreted. It localises to the extracellular space. Its subcellular location is the extracellular matrix. In terms of biological role, may be involved in conversion of asexual males and females to the sexual pathway. This Volvox carteri (Green alga) protein is Perphorin-1.